A 365-amino-acid polypeptide reads, in one-letter code: Histidinol-phosphate aminotransferase 2 (365 aa).

Position 222 is an N6-(pyridoxal phosphate)lysine (Lys222).

It belongs to the class-II pyridoxal-phosphate-dependent aminotransferase family. Histidinol-phosphate aminotransferase subfamily. As to quaternary structure, homodimer. Pyridoxal 5'-phosphate serves as cofactor.

The enzyme catalyses L-histidinol phosphate + 2-oxoglutarate = 3-(imidazol-4-yl)-2-oxopropyl phosphate + L-glutamate. It functions in the pathway amino-acid biosynthesis; L-histidine biosynthesis; L-histidine from 5-phospho-alpha-D-ribose 1-diphosphate: step 7/9. This Bordetella parapertussis (strain 12822 / ATCC BAA-587 / NCTC 13253) protein is Histidinol-phosphate aminotransferase 2 (hisC2).